We begin with the raw amino-acid sequence, 482 residues long: NAD(+) hydrolase ThsA (482 aa).

One can recognise a Deacetylase sirtuin-type domain in the interval 3-281 (EHEQKIMIDR…EEITKRFRCK (279 aa)). Residues Asp112 and His150 each coordinate NAD(+). His150 acts as the Proton acceptor in catalysis. Positions 282–482 (NVFLSGSAHE…SKIHDVIKLI (201 aa)) are SLOG (STALD) domain. 8 residues coordinate 3'cADPR: Gly287, Ser288, Leu324, Phe355, Arg373, Lys390, Gly407, and Glu411.

The protein belongs to the soluble Thoeris ThsA family. Homotetramer in solution.

The enzyme catalyses NAD(+) + H2O = ADP-D-ribose + nicotinamide + H(+). Its activity is regulated as follows. In vivo probably activated by a cyclic ADP-D-ribose generated by ThsB (might be 3'cADPR). NAD(+) hydrolyzing component (NADase) of the Thoeris antiviral defense system, composed of ThsA and ThsB (maybe J591_1492). As purified, has NADase activity that is not activated by any tested cADPR isomers; binds 3'cADPR better than 2'cADPR. It was suggested the purified protein is already in a fully active state. Upon activation binds and hydrolyzes NAD(+), leading to cell death and inhibition of phage replication. The polypeptide is NAD(+) hydrolase ThsA (Acinetobacter baumannii (strain 532279)).